A 363-amino-acid chain; its full sequence is Peptide chain release factor 1 (363 aa).

At Q237 the chain carries N5-methylglutamine. Positions 286-295 (EKRRSAEATT) are enriched in basic and acidic residues. Residues 286–305 (EKRRSAEATTRRNLVGSGDR) are disordered.

The protein belongs to the prokaryotic/mitochondrial release factor family. Post-translationally, methylated by PrmC. Methylation increases the termination efficiency of RF1.

It is found in the cytoplasm. Functionally, peptide chain release factor 1 directs the termination of translation in response to the peptide chain termination codons UAG and UAA. This Shewanella amazonensis (strain ATCC BAA-1098 / SB2B) protein is Peptide chain release factor 1.